We begin with the raw amino-acid sequence, 812 residues long: G patch domain-containing protein 1 homolog (812 aa).

The segment at Met1–Arg42 is disordered. The span at Gln29 to Gly40 shows a compositional bias: basic and acidic residues. The G-patch domain maps to Ser145–Lys191. Disordered stretches follow at residues Ala384–Glu416 and Asn584–Lys812. Residues Ile586–Ser609 are compositionally biased toward basic and acidic residues. Acidic residues-rich tracts occupy residues Asp610–Ala630 and Asp653–Glu668. Residues Glu669–Gln720 show a composition bias toward basic and acidic residues. Over residues Met761–Ser794 the composition is skewed to basic residues. Residues Asp800 to Lys812 show a composition bias toward acidic residues.

The protein belongs to the GPATCH1 family.

In Caenorhabditis elegans, this protein is G patch domain-containing protein 1 homolog.